The primary structure comprises 134 residues: Translation initiation factor 2 subunit beta (134 aa).

The protein belongs to the eIF-2-beta/eIF-5 family. As to quaternary structure, heterotrimer composed of an alpha, a beta and a gamma chain.

In terms of biological role, eIF-2 functions in the early steps of protein synthesis by forming a ternary complex with GTP and initiator tRNA. This chain is Translation initiation factor 2 subunit beta, found in Pyrobaculum neutrophilum (strain DSM 2338 / JCM 9278 / NBRC 100436 / V24Sta) (Thermoproteus neutrophilus).